Consider the following 324-residue polypeptide: Stomatin-like protein stl-1 (324 aa).

This sequence belongs to the band 7/mec-2 family. In terms of tissue distribution, widely expressed in most tissues, including body wall muscles, intestinal epithelia, and pharynx and head neurons.

Its subcellular location is the mitochondrion. Functionally, mitochondrial protein that probably regulates the biogenesis and the activity of mitochondria. In neurons, involved in mitochondrial fusion and recovery of normal locomotory behavior during reoxygenation; probably acts independently of egl-9 and the canonical hypoxia response pathway. The sequence is that of Stomatin-like protein stl-1 from Caenorhabditis elegans.